Here is a 361-residue protein sequence, read N- to C-terminus: Tryptophan--tRNA ligase, mitochondrial (361 aa).

The N-terminal 16 residues, 1-16 (MAKLPKITSLLPHSRV), are a transit peptide targeting the mitochondrion. ATP-binding positions include Q21 and 27 to 30 (HIGN). Positions 22–30 (PTGIPHIGN) match the 'HIGH' region motif. Residue D165 coordinates L-tryptophan. ATP is bound by residues 177 to 179 (GKD), 225 to 229 (KMSKS), and K228. A 'KMSKS' region motif is present at residues 225-229 (KMSKS).

It belongs to the class-I aminoacyl-tRNA synthetase family. As to quaternary structure, homodimer.

Its subcellular location is the mitochondrion matrix. The enzyme catalyses tRNA(Trp) + L-tryptophan + ATP = L-tryptophyl-tRNA(Trp) + AMP + diphosphate + H(+). The protein is Tryptophan--tRNA ligase, mitochondrial of Schizosaccharomyces pombe (strain 972 / ATCC 24843) (Fission yeast).